A 269-amino-acid chain; its full sequence is Shikimate dehydrogenase (NADP(+)) (269 aa).

Shikimate-binding positions include Ser14–Ser16 and Thr61. Catalysis depends on Lys65, which acts as the Proton acceptor. Glu77 contacts NADP(+). Residues Asn86 and Asp102 each coordinate shikimate. Residues Gly126–Ala130, Asn149–Lys154, and Met213 each bind NADP(+). Tyr215 contributes to the shikimate binding site. Gly238 contacts NADP(+).

This sequence belongs to the shikimate dehydrogenase family. In terms of assembly, homodimer.

It catalyses the reaction shikimate + NADP(+) = 3-dehydroshikimate + NADPH + H(+). The protein operates within metabolic intermediate biosynthesis; chorismate biosynthesis; chorismate from D-erythrose 4-phosphate and phosphoenolpyruvate: step 4/7. Its function is as follows. Involved in the biosynthesis of the chorismate, which leads to the biosynthesis of aromatic amino acids. Catalyzes the reversible NADPH linked reduction of 3-dehydroshikimate (DHSA) to yield shikimate (SA). This chain is Shikimate dehydrogenase (NADP(+)), found in Pasteurella multocida (strain Pm70).